Here is a 164-residue protein sequence, read N- to C-terminus: FMN reductase (NADH) RutF (164 aa).

It belongs to the non-flavoprotein flavin reductase family. RutF subfamily.

The enzyme catalyses FMNH2 + NAD(+) = FMN + NADH + 2 H(+). Catalyzes the reduction of FMN to FMNH2 which is used to reduce pyrimidine by RutA via the Rut pathway. This Escherichia coli O127:H6 (strain E2348/69 / EPEC) protein is FMN reductase (NADH) RutF.